The primary structure comprises 312 residues: uncharacterized protein (312 aa).

This is an uncharacterized protein from Escherichia coli O157:H7.